Reading from the N-terminus, the 133-residue chain is ATP synthase epsilon chain (133 aa).

It belongs to the ATPase epsilon chain family. F-type ATPases have 2 components, CF(1) - the catalytic core - and CF(0) - the membrane proton channel. CF(1) has five subunits: alpha(3), beta(3), gamma(1), delta(1), epsilon(1). CF(0) has three main subunits: a, b and c.

The protein localises to the cell membrane. Its function is as follows. Produces ATP from ADP in the presence of a proton gradient across the membrane. In Halalkalibacterium halodurans (strain ATCC BAA-125 / DSM 18197 / FERM 7344 / JCM 9153 / C-125) (Bacillus halodurans), this protein is ATP synthase epsilon chain.